The primary structure comprises 208 residues: Imidazoleglycerol-phosphate dehydratase (208 aa).

Residues 1-20 (MSRRATVKAPRAGAAARRGA) are disordered. Over residues 7-19 (VKAPRAGAAARRG) the composition is skewed to low complexity.

It belongs to the imidazoleglycerol-phosphate dehydratase family.

Its subcellular location is the cytoplasm. It catalyses the reaction D-erythro-1-(imidazol-4-yl)glycerol 3-phosphate = 3-(imidazol-4-yl)-2-oxopropyl phosphate + H2O. The protein operates within amino-acid biosynthesis; L-histidine biosynthesis; L-histidine from 5-phospho-alpha-D-ribose 1-diphosphate: step 6/9. The protein is Imidazoleglycerol-phosphate dehydratase of Anaeromyxobacter sp. (strain K).